The primary structure comprises 466 residues: Cysteine--tRNA ligase (466 aa).

Cysteine 27 contacts Zn(2+). The 'HIGH' region motif lies at 29-39 (PTVYDDAHLGH). Residues cysteine 208, histidine 238, and glutamate 242 each contribute to the Zn(2+) site. Positions 270–274 (KMSKS) match the 'KMSKS' region motif. An ATP-binding site is contributed by lysine 273.

The protein belongs to the class-I aminoacyl-tRNA synthetase family. As to quaternary structure, monomer. Zn(2+) is required as a cofactor.

The protein resides in the cytoplasm. It carries out the reaction tRNA(Cys) + L-cysteine + ATP = L-cysteinyl-tRNA(Cys) + AMP + diphosphate. This Sulfurimonas denitrificans (strain ATCC 33889 / DSM 1251) (Thiomicrospira denitrificans (strain ATCC 33889 / DSM 1251)) protein is Cysteine--tRNA ligase.